The sequence spans 174 residues: Peptide deformylase (174 aa).

Fe cation is bound by residues Cys-96 and His-138. The active site involves Glu-139. His-142 contacts Fe cation.

Belongs to the polypeptide deformylase family. Requires Fe(2+) as cofactor.

The enzyme catalyses N-terminal N-formyl-L-methionyl-[peptide] + H2O = N-terminal L-methionyl-[peptide] + formate. Functionally, removes the formyl group from the N-terminal Met of newly synthesized proteins. Requires at least a dipeptide for an efficient rate of reaction. N-terminal L-methionine is a prerequisite for activity but the enzyme has broad specificity at other positions. The sequence is that of Peptide deformylase from Helicobacter pylori (strain J99 / ATCC 700824) (Campylobacter pylori J99).